The following is a 379-amino-acid chain: Quinolinate synthase (379 aa).

Histidine 60 and serine 81 together coordinate iminosuccinate. [4Fe-4S] cluster is bound at residue cysteine 126. Iminosuccinate is bound by residues 152–154 and serine 169; that span reads YAN. Cysteine 213 is a binding site for [4Fe-4S] cluster. Residues 239 to 241 and threonine 256 each bind iminosuccinate; that span reads HPE. Cysteine 310 provides a ligand contact to [4Fe-4S] cluster.

The protein belongs to the quinolinate synthase family. Type 1 subfamily. [4Fe-4S] cluster serves as cofactor.

It localises to the cytoplasm. The enzyme catalyses iminosuccinate + dihydroxyacetone phosphate = quinolinate + phosphate + 2 H2O + H(+). The protein operates within cofactor biosynthesis; NAD(+) biosynthesis; quinolinate from iminoaspartate: step 1/1. In terms of biological role, catalyzes the condensation of iminoaspartate with dihydroxyacetone phosphate to form quinolinate. The chain is Quinolinate synthase from Herminiimonas arsenicoxydans.